The chain runs to 355 residues: Methionine import ATP-binding protein MetN 1 (355 aa).

Residues 6–245 (IDLKDIAVTF…PKAPLTVDFV (240 aa)) enclose the ABC transporter domain. 42–49 (GYSGAGKS) contributes to the ATP binding site.

It belongs to the ABC transporter superfamily. Methionine importer (TC 3.A.1.24) family. In terms of assembly, the complex is composed of two ATP-binding proteins (MetN), two transmembrane proteins (MetI) and a solute-binding protein (MetQ).

Its subcellular location is the cell membrane. It carries out the reaction L-methionine(out) + ATP + H2O = L-methionine(in) + ADP + phosphate + H(+). The enzyme catalyses D-methionine(out) + ATP + H2O = D-methionine(in) + ADP + phosphate + H(+). Its function is as follows. Part of the ABC transporter complex MetNIQ involved in methionine import. Responsible for energy coupling to the transport system. This is Methionine import ATP-binding protein MetN 1 from Lactiplantibacillus plantarum (strain ATCC BAA-793 / NCIMB 8826 / WCFS1) (Lactobacillus plantarum).